The sequence spans 152 residues: MKCPYCSYNESKVVDSRSTEDSISIRRRRECLECGKRYTTYEKIESVPILVIKKNLNREYFDRDKIVNGMIKACQKRPVSRQQIEEIVDEIEKKINNSMITEVKSEYIGELIMEKLKDIDEVSYVRFASVYRQFKDINTFMEEIKKLKDREL.

A zinc finger spans residues 3–34; it reads CPYCSYNESKVVDSRSTEDSISIRRRRECLEC. Residues 49-139 enclose the ATP-cone domain; sequence ILVIKKNLNR…VYRQFKDINT (91 aa).

This sequence belongs to the NrdR family. The cofactor is Zn(2+).

Its function is as follows. Negatively regulates transcription of bacterial ribonucleotide reductase nrd genes and operons by binding to NrdR-boxes. This chain is Transcriptional repressor NrdR, found in Clostridium tetani (strain Massachusetts / E88).